Reading from the N-terminus, the 421-residue chain is C4-dicarboxylate transport protein (421 aa).

A run of 8 helical transmembrane segments spans residues 9–29, 39–59, 76–96, 145–165, 185–205, 219–239, 316–336, and 348–368; these read VQVITAVIIGVIVGLVWPDVG, FINAVKMVIAPIIFFTIVLGI, FIYFEVVTTLALIIGLFVVNI, GDILQVLFFSILFGVGLAALG, IIGYIMRAAPIGAFGAMAYTI, LMMSVYITMFLFVFVALNIIC, VFGVDLSIGQQITIILVLMLT, and FIVLASTLSALQVIPLEGLAL.

Belongs to the dicarboxylate/amino acid:cation symporter (DAACS) (TC 2.A.23) family.

Its subcellular location is the cell membrane. Its function is as follows. Responsible for the transport of succinate and fumarate, but not malate, across the membrane. The sequence is that of C4-dicarboxylate transport protein (dctA) from Bacillus subtilis (strain 168).